We begin with the raw amino-acid sequence, 119 residues long: Large ribosomal subunit protein bL20 (119 aa).

The protein belongs to the bacterial ribosomal protein bL20 family.

Its function is as follows. Binds directly to 23S ribosomal RNA and is necessary for the in vitro assembly process of the 50S ribosomal subunit. It is not involved in the protein synthesizing functions of that subunit. This is Large ribosomal subunit protein bL20 from Alkaliphilus metalliredigens (strain QYMF).